We begin with the raw amino-acid sequence, 339 residues long: Tetraacyldisaccharide 4'-kinase (339 aa).

58-65 contacts ATP; it reads TVGGSGKT.

It belongs to the LpxK family.

The catalysed reaction is a lipid A disaccharide + ATP = a lipid IVA + ADP + H(+). It functions in the pathway glycolipid biosynthesis; lipid IV(A) biosynthesis; lipid IV(A) from (3R)-3-hydroxytetradecanoyl-[acyl-carrier-protein] and UDP-N-acetyl-alpha-D-glucosamine: step 6/6. Functionally, transfers the gamma-phosphate of ATP to the 4'-position of a tetraacyldisaccharide 1-phosphate intermediate (termed DS-1-P) to form tetraacyldisaccharide 1,4'-bis-phosphate (lipid IVA). The polypeptide is Tetraacyldisaccharide 4'-kinase (Shewanella baltica (strain OS155 / ATCC BAA-1091)).